We begin with the raw amino-acid sequence, 394 residues long: Cysteine desulfurase IscS (394 aa).

Pyridoxal 5'-phosphate contacts are provided by residues 72–73 (GT), Asn152, Gln180, and 200–202 (SAH). The residue at position 203 (Lys203) is an N6-(pyridoxal phosphate)lysine. Thr238 provides a ligand contact to pyridoxal 5'-phosphate. Residue Cys326 is the Cysteine persulfide intermediate of the active site. Position 326 (Cys326) interacts with [2Fe-2S] cluster.

The protein belongs to the class-V pyridoxal-phosphate-dependent aminotransferase family. NifS/IscS subfamily. In terms of assembly, homodimer. Forms a heterotetramer with IscU, interacts with other sulfur acceptors. It depends on pyridoxal 5'-phosphate as a cofactor.

The protein resides in the cytoplasm. The catalysed reaction is (sulfur carrier)-H + L-cysteine = (sulfur carrier)-SH + L-alanine. It participates in cofactor biosynthesis; iron-sulfur cluster biosynthesis. Its function is as follows. Master enzyme that delivers sulfur to a number of partners involved in Fe-S cluster assembly, tRNA modification or cofactor biosynthesis. Catalyzes the removal of elemental sulfur atoms from cysteine to produce alanine. Functions as a sulfur delivery protein for Fe-S cluster synthesis onto IscU, an Fe-S scaffold assembly protein, as well as other S acceptor proteins. The sequence is that of Cysteine desulfurase IscS from Dictyoglomus turgidum (strain DSM 6724 / Z-1310).